Reading from the N-terminus, the 117-residue chain is Immunoglobulin kappa variable 1D-12 (117 aa).

The N-terminal stretch at 1–22 (MDMMVPAQLLGLLLLWFPGSRC) is a signal peptide. The interval 23-45 (DIQMTQSPSSVSASVGDRVTITC) is framework-1. The 94-residue stretch at 24–117 (IQMTQSPSSV…YYCQQANSFP (94 aa)) folds into the Ig-like domain. An intrachain disulfide couples C45 to C110. The tract at residues 46–56 (RASQGISSWLA) is complementarity-determining-1. Positions 57 to 71 (WYQQKPGKAPKLLIY) are framework-2. The segment at 72–78 (AASSLQS) is complementarity-determining-2. The interval 79 to 110 (GVPSRFSGSGSGTDFTLTISSLQPEDFATYYC) is framework-3. Residues 111 to 117 (QQANSFP) are complementarity-determining-3.

As to quaternary structure, immunoglobulins are composed of two identical heavy chains and two identical light chains; disulfide-linked.

The protein localises to the secreted. It is found in the cell membrane. Its function is as follows. V region of the variable domain of immunoglobulin light chains that participates in the antigen recognition. Immunoglobulins, also known as antibodies, are membrane-bound or secreted glycoproteins produced by B lymphocytes. In the recognition phase of humoral immunity, the membrane-bound immunoglobulins serve as receptors which, upon binding of a specific antigen, trigger the clonal expansion and differentiation of B lymphocytes into immunoglobulins-secreting plasma cells. Secreted immunoglobulins mediate the effector phase of humoral immunity, which results in the elimination of bound antigens. The antigen binding site is formed by the variable domain of one heavy chain, together with that of its associated light chain. Thus, each immunoglobulin has two antigen binding sites with remarkable affinity for a particular antigen. The variable domains are assembled by a process called V-(D)-J rearrangement and can then be subjected to somatic hypermutations which, after exposure to antigen and selection, allow affinity maturation for a particular antigen. In Homo sapiens (Human), this protein is Immunoglobulin kappa variable 1D-12.